The following is an 870-amino-acid chain: Dynamin-2 (870 aa).

The Dynamin-type G domain maps to 28–294 (HLDLPQIAVV…LTNHIRESLP (267 aa)). Residues 38–45 (GGQSAGKS) form a G1 motif region. Residues Ser41, Gly43, Lys44, Ser45, Ser46, Arg59, and Gly60 each coordinate GDP. The segment at 64-66 (VTR) is G2 motif. Positions 136–139 (DLPG) are G3 motif. The tract at residues 205–208 (TKLD) is G4 motif. 3 residues coordinate GDP: Lys206, Asp208, and Asp211. Tyr231 carries the post-translational modification Phosphotyrosine. Residues 235–238 (VNRS) form a G5 motif region. The GDP site is built by Asn236, Arg237, and Gln239. Lys299 carries the post-translational modification N6-acetyllysine. The PH domain maps to 519–625 (LVIRRGWLTI…WKASFLRAGV (107 aa)). Position 597 is a phosphotyrosine (Tyr597). N6-acetyllysine is present on Lys598. A GED domain is found at 653-744 (VETIRNLVDS…IIGDISTSTV (92 aa)). Residues 741–870 (TSTVSTPVPP…IRPAEPSLLD (130 aa)) are disordered. Phosphothreonine is present on Thr755. Over residues 756–767 (WLQNTSGHSPTP) the composition is skewed to polar residues. Ser764 bears the Phosphoserine; by CDK1 mark. Pro residues predominate over residues 826-846 (SAPPQIPSRPARIPPGIPPGV). Positions 847 to 864 (PSRRAPAAPSRPTIIRPA) are enriched in low complexity.

Belongs to the TRAFAC class dynamin-like GTPase superfamily. Dynamin/Fzo/YdjA family. Oligomerizes into a helical polymer that self-assembles around the vesicle membrane, when associated to the menbrane through lipid binding. Interacts with SHANK1 and SHANK2. Interacts with SNX9. Interacts (via C-terminal proline-rich domain (PRD)) with SNX18 (via SH3 domain); this interaction regulates ATG9A and ATG16L1 trafficking from recycling endosomes to sites of autophagosome formation. Interacts with SNX33 (via SH3 domain). Interacts with MYO1E (via SH3 domain). Interacts with PSTPIP1 (via SH3 domain). Interacts with CTNND2. Interacts (via C-terminal proline-rich domain (PRD)) with BIN1 (via SH3 domain); this interaction allows the recruitment of DNM2 to the membrane tubules and inhibits self-assembly-stimulated GTPase activity on the membrane. Interacts with GABARAP, GABARAPL1 and GABARAPL2. Interacts with MAP1LC3B (the lipidate and non-lipidated LC3 form); this interaction mediates recycling endosome scission leading to autophagosome release. Interacts with ITSN1. Interacts (via C-terminal proline-rich domain (PRD)) with SH3BP4 (via SH3 domain); this interaction controls the GTPase activity and is prevented by EGFR-induced tyrosine phosphorylation of either DNM2 or SH3BP4. Interacts with MYOF. May interact with PIK3C3. May be a component of a complex composed of RAB5A (in GDP-bound form), DYN2 and PIK3C3. Interacts with SDC4; this interaction is markedly enhanced at focal ahesion site upon induction of focal adhesions and stress-fiber formation. Interacts with ACTN1. Interacts with CTTN; this interaction stimulates the intrinsic GTPase activity of DNM2 and stabilizes the association of DNM2 and actin filaments; in addition this interaction is stimulated by ligand binding to the receptor, leading to the recruitment of the DNM2-CTTN complex to the sequestered receptor-ligand complex to its internalization. Interacts with NOSTRIN (via SH3 domain); this interaction allows the recruitment of NOS3 to dynamin-positive structures. Interacts with TUBG1; this interaction may participate in centrosome cohesion. In terms of processing, phosphorylation at Ser-848 by GSK3-alpha relieves the inhibition of BIN1 and promotes endocytosis. Phosphorylation at Ser-764 by CDK1 is greatly increased upon mitotic entry. It regulates cytokinesis downstream of calcineurin, and does not affect clathrin-mediated endocytosis. Dephosphorylated by calcineurin/PP2 during cytokinesis in a Ca(2+)- and calmodulin-dependent manner. Phosphorylated on tyrosine residues by EGFR. Phosphorylated on tyrosine residues after activation of SRC. As to expression, expressed in most tissues during embryonic development, including the peripheral nervous system although no expression is evident in skeletal muscle or heart.

The protein localises to the cytoplasm. It localises to the cytoskeleton. Its subcellular location is the cytoplasmic vesicle. It is found in the clathrin-coated vesicle. The protein resides in the cell projection. The protein localises to the uropodium. It localises to the endosome. Its subcellular location is the microtubule organizing center. It is found in the centrosome. The protein resides in the centriole. The protein localises to the recycling endosome. It localises to the phagocytic cup. Its subcellular location is the phagosome membrane. It is found in the podosome. The protein resides in the cell junction. The protein localises to the postsynaptic density. It localises to the synapse. Its subcellular location is the synaptosome. It is found in the midbody. The protein resides in the membrane. The protein localises to the clathrin-coated pit. The catalysed reaction is GTP + H2O = GDP + phosphate + H(+). In terms of biological role, catalyzes the hydrolysis of GTP and utilizes this energy to mediate vesicle scission at plasma membrane during endocytosis and filament remodeling at many actin structures during organization of the actin cytoskeleton. Plays an important role in vesicular trafficking processes, namely clathrin-mediated endocytosis (CME), exocytic and clathrin-coated vesicle from the trans-Golgi network, and PDGF stimulated macropinocytosis. During vesicular trafficking process, associates to the membrane, through lipid binding, and self-assembles into ring-like structure through oligomerization to form a helical polymer around the vesicle membrane and leading to vesicle scission. Plays a role in organization of the actin cytoskeleton by mediating arrangement of stress fibers and actin bundles in podocytes. During organization of the actin cytoskeleton, self-assembles into ring-like structure that directly bundles actin filaments to form typical membrane tubules decorated with dynamin spiral polymers. Self-assembly increases GTPase activity and the GTP hydrolysis causes the rapid depolymerization of dynamin spiral polymers, and results in dispersion of actin bundles. Remodels, through its interaction with CTTN, bundled actin filaments in a GTPase-dependent manner and plays a role in orchestrating the global actomyosin cytoskeleton. The interaction with CTTN stabilizes the interaction of DNM2 and actin filaments and stimulates the intrinsic GTPase activity that results in actin filament-barbed ends and increases the sensitivity of filaments in bundles to the actin depolymerizing factor, CFL1. Plays a role in the autophagy process, by participating in the formation of ATG9A vesicles destined for the autophagosomes through its interaction with SNX18, by mediating recycling endosome scission leading to autophagosome release through MAP1LC3B interaction. Also regulates maturation of apoptotic cell corpse-containing phagosomes by recruiting PIK3C3 to the phagosome membrane. Also plays a role in cytokinesis. May participate in centrosome cohesion through its interaction with TUBG1. Plays a role in the regulation of neuron morphology, axon growth and formation of neuronal growth cones. Involved in membrane tubulation. The chain is Dynamin-2 from Mus musculus (Mouse).